Here is a 330-residue protein sequence, read N- to C-terminus: Putative protein N-methyltransferase FAM86B2 (330 aa).

Position 1 is an N-acetylmethionine (methionine 1). Residues tryptophan 139, 165–167 (GSG), tryptophan 228, and alanine 247 contribute to the S-adenosyl-L-methionine site.

The protein belongs to the class I-like SAM-binding methyltransferase superfamily. EEF2KMT family. Interacts with EEF2KMT.

This Homo sapiens (Human) protein is Putative protein N-methyltransferase FAM86B2 (FAM86B2).